Consider the following 129-residue polypeptide: Transcription antitermination protein NusB (129 aa).

Belongs to the NusB family.

In terms of biological role, involved in transcription antitermination. Required for transcription of ribosomal RNA (rRNA) genes. Binds specifically to the boxA antiterminator sequence of the ribosomal RNA (rrn) operons. This Staphylococcus aureus (strain MRSA252) protein is Transcription antitermination protein NusB.